We begin with the raw amino-acid sequence, 456 residues long: Elongator complex protein 4 (456 aa).

Positions 1 to 11 are enriched in basic and acidic residues; the sequence is MSFRKRGEILN. A disordered region spans residues 1–91; sequence MSFRKRGEIL…SQPTTSTGSA (91 aa). The residue at position 13 (R13) is an Omega-N-methylarginine. The segment covering 18 to 27 has biased composition (low complexity); the sequence is RGPLLRGPPR. The segment covering 57-66 has biased composition (basic and acidic residues); the sequence is NIADESKTKM. Over residues 77–90 the composition is skewed to low complexity; the sequence is PSPATSQPTTSTGS. A Phosphoserine modification is found at S222. A disordered region spans residues 424–444; that stretch reads EGSAASEQSHSHSHSDEISHN. Residues 432 to 442 show a composition bias toward basic and acidic residues; it reads SHSHSHSDEIS.

It belongs to the ELP4 family. In terms of assembly, component of the elongator complex which consists of ELP1/IKI3, ELP2, ELP3, ELP4, ELP5/IKI1 and ELP6. The elongator complex is composed of two copies of the Elp123 subcomplex (composed of ELP1/IKI3, ELP2 and ELP3) and two copies of the Elp456 subcomplex (composed of ELP4, ELP5/IKI1 and ELP6). The Elp123 subcomplex forms a two-lobed scaffold, which binds the Elp456 subcomplex asymmetrically. In each lobe, ELP2 is tightly sandwiched between ELP1/IKI3 and ELP3. The Elp123 subcomplex binds tRNA through ELP1/IKI3 and ELP3 and can bind 2 tRNAs simultaneously. tRNA-binding by the Elp123 subcomplex induces conformational rearrangements which precisely position the targeted anticodon base in the active site. The Elp456 subcomplex binds tRNA and has ATPase activity. ELP4 interacts with KTI12.

It is found in the cytoplasm. The protein resides in the nucleus. It participates in tRNA modification; 5-methoxycarbonylmethyl-2-thiouridine-tRNA biosynthesis. Its function is as follows. Component of the elongator complex, a multiprotein complex which is required for multiple tRNA modifications, including mcm5U (5-methoxycarbonylmethyl uridine), mcm5s2U (5-methoxycarbonylmethyl-2-thiouridine), and ncm5U (5-carbamoylmethyl uridine). The elongator complex catalyzes formation of carboxymethyluridine in the wobble base at position 34 in tRNAs. It functions as a gamma-toxin target (TOT); disruption of the complex confers resistance to Kluyveromyces lactis toxin zymocin (pGKL1 killer toxin). May also be involved in sensitivity to Pichia inositovora toxin. This is Elongator complex protein 4 from Saccharomyces cerevisiae (strain ATCC 204508 / S288c) (Baker's yeast).